A 137-amino-acid polypeptide reads, in one-letter code: GEL complex subunit OPTI (137 aa).

At 1–44 (MSGGRRKEEPPQPQLANGALKVSVWSKVLRSDAAWEDKDEFLDV) the chain is on the cytoplasmic side. Residues 45–65 (IYWFRQIIAVVLGVIWGVLPL) traverse the membrane as a helical segment. Residue Arg66 is a topological domain, lumenal. The helical transmembrane segment at 67–84 (GFLGIAGFCLINAGVLYL) threads the bilayer. Over 85 to 103 (YFSNYLQIDEEEYGGTWEL) the chain is Cytoplasmic. Residues 104–127 (TKEGFMTSFALFMVCVADSFTTGH) form a helical membrane-spanning segment. The Lumenal portion of the chain corresponds to 128-137 (LDHLLHCHPL).

The protein belongs to the EMC6 family. In terms of assembly, component of the GET- and EMC-like (GEL) complex, composed of RAB5IF/OPTI and TMCO1. The GEL complex is part of the multi-pass translocon (MPT) complex, composed of three subcomplexes, the GEL complex (composed of RAB5IF/OPTI and TMCO1), the BOS complex (composed of NCLN/Nicalin, NOMO and TMEM147) and the PAT complex (composed of WDR83OS/Asterix and CCDC47). The MPT complex associates with the SEC61 complex. Interacts with NDUFS3, NDUFA4, NDUFV1, NDUFA9 and NDUFS8 of the mitochondrial membrane respiratory chain NADH dehydrogenase (Complex I). Interacts with UQCRC2 of the ubiquinol-cytochrome c reductase complex (Complex III). Interacts with COX5A and COX7C of the cytochrome c oxidase complex (Complex IV). As to expression, expressed in embryonic stem cells and differentiated neuronal cells.

Its subcellular location is the endoplasmic reticulum membrane. The protein localises to the mitochondrion inner membrane. Its function is as follows. Component of the multi-pass translocon (MPT) complex that mediates insertion of multi-pass membrane proteins into the lipid bilayer of membranes. The MPT complex takes over after the SEC61 complex: following membrane insertion of the first few transmembrane segments of proteins by the SEC61 complex, the MPT complex occludes the lateral gate of the SEC61 complex to promote insertion of subsequent transmembrane regions. Within the MPT complex, the GEL subcomplex may mediate insertion of transmembrane regions into the membrane. In addition to its role in multi-pass membrane insertion, RAB5IF/OPTI also acts as an assembly factor for mitochondrial respiratory complexes. This Homo sapiens (Human) protein is GEL complex subunit OPTI.